Consider the following 340-residue polypeptide: Spermidine synthase 2 (340 aa).

Positions 1–41 (MSSTQEASVTDLPVKRPREAEEDNNGGAMETENGGGEIKEP) are disordered. N-acetylserine is present on Ser2. Residues 49–286 (PGWFSEISPM…GVIGFMLCSS (238 aa)) enclose the PABS domain. Gln80 contacts S-adenosyl 3-(methylsulfanyl)propylamine. Tyr110 contacts putrescine. Residues Gln111, Asp135, Glu155, 186 to 187 (DG), and Asp205 each bind S-adenosyl 3-(methylsulfanyl)propylamine. The active-site Proton acceptor is Asp205. Residues 205–208 (DSSD) and Tyr274 each bind putrescine.

It belongs to the spermidine/spermine synthase family. Heterodimer. Component of a multiprotein complex. Interacts with SPMS and SPDSYN1.

It carries out the reaction S-adenosyl 3-(methylsulfanyl)propylamine + putrescine = S-methyl-5'-thioadenosine + spermidine + H(+). It participates in amine and polyamine biosynthesis; spermidine biosynthesis; spermidine from putrescine: step 1/1. The sequence is that of Spermidine synthase 2 (SPDSYN2) from Arabidopsis thaliana (Mouse-ear cress).